A 337-amino-acid chain; its full sequence is Phenylalanine--tRNA ligase alpha subunit (337 aa).

Glu-258 contributes to the Mg(2+) binding site.

It belongs to the class-II aminoacyl-tRNA synthetase family. Phe-tRNA synthetase alpha subunit type 1 subfamily. As to quaternary structure, tetramer of two alpha and two beta subunits. It depends on Mg(2+) as a cofactor.

The protein localises to the cytoplasm. It catalyses the reaction tRNA(Phe) + L-phenylalanine + ATP = L-phenylalanyl-tRNA(Phe) + AMP + diphosphate + H(+). This is Phenylalanine--tRNA ligase alpha subunit from Burkholderia vietnamiensis (strain G4 / LMG 22486) (Burkholderia cepacia (strain R1808)).